A 337-amino-acid polypeptide reads, in one-letter code: Ketol-acid reductoisomerase (NADP(+)) (337 aa).

One can recognise a KARI N-terminal Rossmann domain in the interval 3-183 (VEMFYDDDAD…GGTRAGVIKT (181 aa)). Residues 26–29 (YGSQ), serine 52, serine 54, and 84–87 (DTAQ) contribute to the NADP(+) site. Histidine 109 is an active-site residue. Glycine 135 is an NADP(+) binding site. One can recognise a KARI C-terminal knotted domain in the interval 184-329 (TFKEETETDL…AKLRGLMSWV (146 aa)). Residues aspartate 192, glutamate 196, glutamate 228, and glutamate 232 each coordinate Mg(2+). Substrate is bound at residue serine 253.

Belongs to the ketol-acid reductoisomerase family. The cofactor is Mg(2+).

The enzyme catalyses (2R)-2,3-dihydroxy-3-methylbutanoate + NADP(+) = (2S)-2-acetolactate + NADPH + H(+). It catalyses the reaction (2R,3R)-2,3-dihydroxy-3-methylpentanoate + NADP(+) = (S)-2-ethyl-2-hydroxy-3-oxobutanoate + NADPH + H(+). Its pathway is amino-acid biosynthesis; L-isoleucine biosynthesis; L-isoleucine from 2-oxobutanoate: step 2/4. It functions in the pathway amino-acid biosynthesis; L-valine biosynthesis; L-valine from pyruvate: step 2/4. Involved in the biosynthesis of branched-chain amino acids (BCAA). Catalyzes an alkyl-migration followed by a ketol-acid reduction of (S)-2-acetolactate (S2AL) to yield (R)-2,3-dihydroxy-isovalerate. In the isomerase reaction, S2AL is rearranged via a Mg-dependent methyl migration to produce 3-hydroxy-3-methyl-2-ketobutyrate (HMKB). In the reductase reaction, this 2-ketoacid undergoes a metal-dependent reduction by NADPH to yield (R)-2,3-dihydroxy-isovalerate. The sequence is that of Ketol-acid reductoisomerase (NADP(+)) from Nocardia farcinica (strain IFM 10152).